Reading from the N-terminus, the 36-residue chain is HTDGIFSSDYSKYLDNRRTKDFVQWLLSTKRNGANT.

This sequence belongs to the glucagon family. As to expression, produced by the X-cells of the islets of pancreas.

The protein localises to the secreted. Promotes hydrolysis of glycogen and lipids, and raises the blood sugar level. The polypeptide is Glucagon (gcg) (Hydrolagus colliei (Spotted ratfish)).